The chain runs to 85 residues: U4-theraphotoxin-Hhn1a (85 aa).

A signal peptide spans 1 to 22 (MKVTLIAILTCAAVLVLHTTAA). The propeptide occupies 23–48 (EEFEAESQLMEVGMPDTELAAVDEER). 3 disulfides stabilise this stretch: Cys-52-Cys-66, Cys-56-Cys-77, and Cys-71-Cys-82.

Belongs to the neurotoxin 12 (Hwtx-2) family. 02 (Hwtx-2) subfamily. As to quaternary structure, monomer. As to expression, expressed by the venom gland.

The protein resides in the secreted. Neurotoxin active on both insects and mammals. The sequence is that of U4-theraphotoxin-Hhn1a from Cyriopagopus hainanus (Chinese bird spider).